The sequence spans 674 residues: Transcription activator of gluconeogenesis PMAA_028970 (674 aa).

The interval 1–46 (MMDTDKDDLPSATDHSEHESGDAVKVEGGASKTASNSKDPSRPRRK) is disordered. A compositionally biased stretch (basic and acidic residues) spans 14-25 (DHSEHESGDAVK). Residues 52–80 (CFACQRAHLTCGDERPCQRCIKRGLQDAC) constitute a DNA-binding region (zn(2)-C6 fungal-type). Disordered stretches follow at residues 117–181 (ISPT…ATPA), 250–321 (TGAG…SGLY), 344–374 (IGSNTFASPSSTTSPHATTIAPSQFDDSPMK), and 519–557 (NLNVNTGGGNNTSSQSDSTSSSIRGGAGGRMRNQEPGPN). Over residues 120–148 (TEYTQNGTNNAQQQQQKSGTIYASSTPSY) the composition is skewed to polar residues. Residues 149–163 (NNNNGTFDTNNATNT) show a composition bias toward low complexity. 2 stretches are compositionally biased toward polar residues: residues 269–278 (GQRSNSQQFG) and 285–294 (TTESPSQQSF). 2 stretches are compositionally biased toward low complexity: residues 348-366 (TFASPSSTTSPHATTIAPS) and 529-540 (NTSSQSDSTSSS).

The protein belongs to the ERT1/acuK family.

Its subcellular location is the nucleus. In terms of biological role, transcription factor which regulates nonfermentable carbon utilization. Activator of gluconeogenetic genes. The polypeptide is Transcription activator of gluconeogenesis PMAA_028970 (Talaromyces marneffei (strain ATCC 18224 / CBS 334.59 / QM 7333) (Penicillium marneffei)).